We begin with the raw amino-acid sequence, 534 residues long: CTP synthase (534 aa).

The interval 1-267 (MTKYIFVTGG…DQIVCDHLKL (267 aa)) is amidoligase domain. A CTP-binding site is contributed by serine 13. Serine 13 provides a ligand contact to UTP. 14-19 (SIGKGI) provides a ligand contact to ATP. Tyrosine 54 lines the L-glutamine pocket. Residue aspartate 71 coordinates ATP. Positions 71 and 141 each coordinate Mg(2+). CTP is bound by residues 148-150 (DIE), 188-193 (KTKPTQ), and lysine 224. UTP-binding positions include 188–193 (KTKPTQ) and lysine 224. Residues 292–534 (KIALVGKYVE…FVTAAVENMK (243 aa)) form the Glutamine amidotransferase type-1 domain. Glycine 354 contacts L-glutamine. The active-site Nucleophile; for glutamine hydrolysis is the cysteine 381. L-glutamine-binding positions include 382–385 (LGMQ), glutamate 405, and arginine 463. Catalysis depends on residues histidine 508 and glutamate 510.

It belongs to the CTP synthase family. Homotetramer.

It carries out the reaction UTP + L-glutamine + ATP + H2O = CTP + L-glutamate + ADP + phosphate + 2 H(+). The catalysed reaction is L-glutamine + H2O = L-glutamate + NH4(+). It catalyses the reaction UTP + NH4(+) + ATP = CTP + ADP + phosphate + 2 H(+). It functions in the pathway pyrimidine metabolism; CTP biosynthesis via de novo pathway; CTP from UDP: step 2/2. With respect to regulation, allosterically activated by GTP, when glutamine is the substrate; GTP has no effect on the reaction when ammonia is the substrate. The allosteric effector GTP functions by stabilizing the protein conformation that binds the tetrahedral intermediate(s) formed during glutamine hydrolysis. Inhibited by the product CTP, via allosteric rather than competitive inhibition. Catalyzes the ATP-dependent amination of UTP to CTP with either L-glutamine or ammonia as the source of nitrogen. Regulates intracellular CTP levels through interactions with the four ribonucleotide triphosphates. This is CTP synthase from Streptococcus agalactiae serotype V (strain ATCC BAA-611 / 2603 V/R).